We begin with the raw amino-acid sequence, 233 residues long: DnaA regulatory inactivator Hda (233 aa).

The protein belongs to the DnaA family. HdA subfamily. In terms of assembly, the active form seems to be an ADP-bound monomer. Forms the RIDA complex (regulatory inactivation of DnaA) of ATP-DnaA, ADP-Hda and the DNA-loaded beta sliding clamp (dnaN).

Mediates the interaction of DNA replication initiator protein DnaA with DNA polymerase subunit beta sliding clamp (dnaN). Stimulates hydrolysis of ATP-DnaA to ADP-DnaA, rendering DnaA inactive for reinitiation, a process called regulatory inhibition of DnaA or RIDA. The chain is DnaA regulatory inactivator Hda from Escherichia fergusonii (strain ATCC 35469 / DSM 13698 / CCUG 18766 / IAM 14443 / JCM 21226 / LMG 7866 / NBRC 102419 / NCTC 12128 / CDC 0568-73).